The primary structure comprises 504 residues: CDK5 regulatory subunit-associated protein 3 (504 aa).

Short sequence motifs (shuffled ATG8-binding motif) lie at residues 266 to 269 (IDWG), 290 to 293 (IDWG), and 308 to 311 (IDWG). The segment at 268–504 (WGDFGLEAVS…RPVNLMGTSV (237 aa)) is required for interaction with UFL1 and mediates interaction with CHEK1. The interval 353 to 368 (DELMELEIFLSQRAVE) is RPL10a-binding domain (RBD). A Glycyl lysine isopeptide (Lys-Gly) (interchain with G-Cter in SUMO2) cross-link involves residue K448.

The protein belongs to the CDK5RAP3 family. Substrate adapter component of the UFM1 ribosome E3 ligase (UREL) complex, composed of UFL1, DDRGK1 and CDK5RAP3. Interaction with UFL1 anchors CDK5RAP3 in the cytoplasm, preventing its translocation to the nucleus which allows expression of the CCND1 cyclin and progression of cells through the G1/S transition. Interacts with ATG8 family proteins MAP1LC3A, MAP1LC3B, GABARAP, GABARAPL1 and GABARAPL2. Interacts with CDK5R1; competes with CDK5RAP1 and CDK5RAP2. Interacts with RELA. Interacts with CHEK1; may negatively regulate CHEK1 and thereby stimulate entry into mitosis. Interacts with CDKN2A/ARF and MDM2; forms a ternary complex involved in regulation of p53/TP53. Interacts with MAPK14. Interacts with CCNB1. Interacts with TUBG1; may regulate CDK5RAP3 in mitotic G2/M transition checkpoint. May be phosphorylated by CDK5. In terms of processing, ubiquitinated. Probably triggers proteasomal degradation and is negatively regulated by UFL1. Post-translationally, may be ufmylated. Cleaved by caspases early during apoptosis, the resulting peptides may play a role in rupture of the nuclear envelope. As to expression, expressed in vascular endothelium. Up-regulated in failing heart. Highly expressed in the ventricular section in subacute and chronic ischemic heart failure.

The protein localises to the endoplasmic reticulum membrane. Its subcellular location is the cytoplasm. It is found in the nucleus. It localises to the cytoskeleton. The protein resides in the microtubule organizing center. The protein localises to the centrosome. In terms of biological role, substrate adapter of E3 ligase complexes mediating ufmylation, the covalent attachment of the ubiquitin-like modifier UFM1 to substrate proteins, and which is involved in various processes, such as ribosome recycling and reticulophagy (also called ER-phagy). As part of the UREL complex, plays a key role in ribosome recycling by promoting mono-ufmylation of RPL26/uL24 subunit of the 60S ribosome. Ufmylation of RPL26/uL24 occurs on free 60S ribosomes following ribosome dissociation: it weakens the junction between post-termination 60S subunits and SEC61 translocons, promoting release and recycling of the large ribosomal subunit from the endoplasmic reticulum membrane. Ufmylation of RPL26/uL24 and subsequent 60S ribosome recycling either take place after normal termination of translation or after ribosome stalling during cotranslational translocation at the endoplasmic reticulum. Within the UREL complex, CDK5RAP3 acts as a substrate adapter that constrains UFL1 ligase activity to mono-ufmylate RPL26/uL24 at 'Lys-134'. The UREL complex is also involved in reticulophagy in response to endoplasmic reticulum stress by promoting ufmylation of proteins such as CYB5R3, thereby promoting lysosomal degradation of ufmylated proteins. Also acts as a regulator of transcription: negatively regulates NF-kappa-B-mediated gene transcription through the control of RELA phosphorylation. Also regulates mitotic G2/M transition checkpoint and mitotic G2 DNA damage checkpoint. Through its interaction with CDKN2A/ARF and MDM2 may induce MDM2-dependent p53/TP53 ubiquitination, stabilization and activation in the nucleus, thereby promoting G1 cell cycle arrest and inhibition of cell proliferation. May also play a role in the rupture of the nuclear envelope during apoptosis. May regulate MAPK14 activity by regulating its dephosphorylation by PPM1D/WIP1. Required for liver development. This Rattus norvegicus (Rat) protein is CDK5 regulatory subunit-associated protein 3.